A 273-amino-acid polypeptide reads, in one-letter code: Co-chaperone protein DjlA (273 aa).

Topologically, residues 1-6 are periplasmic; that stretch reads MHYWGK. The helical transmembrane segment at 7 to 31 threads the bilayer; the sequence is LLGLIFGVVSGAGFWGIVIGLFIGH. The Cytoplasmic portion of the chain corresponds to 32 to 273; it reads MLDRASVRGN…DLIKKEKGFK (242 aa). A J domain is found at 207-273; the sequence is DACKVLGVRE…DLIKKEKGFK (67 aa).

As to quaternary structure, homodimer.

The protein resides in the cell inner membrane. Its function is as follows. Regulatory DnaK co-chaperone. Direct interaction between DnaK and DjlA is needed for the induction of the wcaABCDE operon, involved in the synthesis of a colanic acid polysaccharide capsule, possibly through activation of the RcsB/RcsC phosphotransfer signaling pathway. The colanic acid capsule may help the bacterium survive conditions outside the host. The polypeptide is Co-chaperone protein DjlA (Photorhabdus laumondii subsp. laumondii (strain DSM 15139 / CIP 105565 / TT01) (Photorhabdus luminescens subsp. laumondii)).